A 95-amino-acid polypeptide reads, in one-letter code: MNIRPLHDRVVIKRMEEERTSPGGIVIPDSAAEKPIKGEVVAVGNGKLLDNGETRPLDLKVGDKVLFGKFAGTEVKVDGEELLVMREDDVMAIVE.

This sequence belongs to the GroES chaperonin family. Heptamer of 7 subunits arranged in a ring. Interacts with the chaperonin GroEL.

It localises to the cytoplasm. Its function is as follows. Together with the chaperonin GroEL, plays an essential role in assisting protein folding. The GroEL-GroES system forms a nano-cage that allows encapsulation of the non-native substrate proteins and provides a physical environment optimized to promote and accelerate protein folding. GroES binds to the apical surface of the GroEL ring, thereby capping the opening of the GroEL channel. In Alkalilimnicola ehrlichii (strain ATCC BAA-1101 / DSM 17681 / MLHE-1), this protein is Co-chaperonin GroES.